The primary structure comprises 179 residues: Large ribosomal subunit protein uL5 (179 aa).

This sequence belongs to the universal ribosomal protein uL5 family. As to quaternary structure, part of the 50S ribosomal subunit; part of the 5S rRNA/L5/L18/L25 subcomplex. Contacts the 5S rRNA and the P site tRNA. Forms a bridge to the 30S subunit in the 70S ribosome.

Its function is as follows. This is one of the proteins that bind and probably mediate the attachment of the 5S RNA into the large ribosomal subunit, where it forms part of the central protuberance. In the 70S ribosome it contacts protein S13 of the 30S subunit (bridge B1b), connecting the 2 subunits; this bridge is implicated in subunit movement. Contacts the P site tRNA; the 5S rRNA and some of its associated proteins might help stabilize positioning of ribosome-bound tRNAs. In Marinomonas sp. (strain MWYL1), this protein is Large ribosomal subunit protein uL5.